Reading from the N-terminus, the 177-residue chain is Crossover junction endodeoxyribonuclease RuvC (177 aa).

Active-site residues include Asp7, Glu68, and Asp141. Asp7, Glu68, and Asp141 together coordinate Mg(2+).

Belongs to the RuvC family. As to quaternary structure, homodimer which binds Holliday junction (HJ) DNA. The HJ becomes 2-fold symmetrical on binding to RuvC with unstacked arms; it has a different conformation from HJ DNA in complex with RuvA. In the full resolvosome a probable DNA-RuvA(4)-RuvB(12)-RuvC(2) complex forms which resolves the HJ. Mg(2+) serves as cofactor.

It localises to the cytoplasm. It catalyses the reaction Endonucleolytic cleavage at a junction such as a reciprocal single-stranded crossover between two homologous DNA duplexes (Holliday junction).. Functionally, the RuvA-RuvB-RuvC complex processes Holliday junction (HJ) DNA during genetic recombination and DNA repair. Endonuclease that resolves HJ intermediates. Cleaves cruciform DNA by making single-stranded nicks across the HJ at symmetrical positions within the homologous arms, yielding a 5'-phosphate and a 3'-hydroxyl group; requires a central core of homology in the junction. The consensus cleavage sequence is 5'-(A/T)TT(C/G)-3'. Cleavage occurs on the 3'-side of the TT dinucleotide at the point of strand exchange. HJ branch migration catalyzed by RuvA-RuvB allows RuvC to scan DNA until it finds its consensus sequence, where it cleaves and resolves the cruciform DNA. The sequence is that of Crossover junction endodeoxyribonuclease RuvC from Nocardioides sp. (strain ATCC BAA-499 / JS614).